The sequence spans 191 residues: GDP-mannose pyrophosphatase (191 aa).

GDP-alpha-D-mannose is bound by residues tyrosine 17, 38–40, arginine 67, and 85–87; these read KRE and AGL. The Nudix hydrolase domain maps to 43-180; the sequence is DRGNGATILL…EIRDGKTVLL (138 aa). Mg(2+) is bound by residues alanine 85, glutamate 100, and glutamate 104. The Nudix box signature appears at 86–106; it reads GLLDNDEPEVCIRKEAIEETG. Residues glutamate 104, glutamate 127, 150 to 151, and lysine 176 contribute to the GDP-alpha-D-mannose site; that span reads DE. Glutamate 151 contacts Mg(2+).

The protein belongs to the Nudix hydrolase family. NudK subfamily. As to quaternary structure, homodimer. Requires Mg(2+) as cofactor.

The enzyme catalyses GDP-alpha-D-mannose + H2O = alpha-D-mannose 1-phosphate + GMP + 2 H(+). Functionally, nucleoside diphosphate sugar hydrolase that hydrolyzes GDP-mannose as its preferred substrate, yielding GMP and mannose-1-phosphate. This Escherichia coli (strain UTI89 / UPEC) protein is GDP-mannose pyrophosphatase (nudK).